We begin with the raw amino-acid sequence, 192 residues long: Casparian strip membrane protein 2 (192 aa).

Over 1-31 the chain is Cytoplasmic; the sequence is MTKDVVVEHGESSKAPLVAAPAASGVGRAAS. The helical transmembrane segment at 32-52 threads the bilayer; that stretch reads VADVFLRFLAIVGTIASAISM. At 53–79 the chain is on the extracellular side; it reads GTTNETLPFFTQFIQFEAKYSDLPSFT. Residue Asn-56 is glycosylated (N-linked (GlcNAc...) asparagine). The helical transmembrane segment at 80-100 threads the bilayer; it reads FFVAANAVVCTYLVLSIPLSI. The Cytoplasmic segment spans residues 101–112; it reads VHIVRPRARYSR. The helical transmembrane segment at 113–133 threads the bilayer; that stretch reads LVLVFFDAAMLTLLTAGASAA. Over 134 to 166 the chain is Extracellular; sequence AAIVYLAHKGNVRANWFAICQQFDSFCERISGS. The helical transmembrane segment at 167 to 187 threads the bilayer; the sequence is LIGSFAAMVLLIMLIFLSAFA. The Cytoplasmic segment spans residues 188–192; sequence LARRH.

Belongs to the Casparian strip membrane proteins (CASP) family. Homodimer and heterodimers.

Its subcellular location is the cell membrane. Its function is as follows. Regulates membrane-cell wall junctions and localized cell wall deposition. Required for establishment of the Casparian strip membrane domain (CSD) and the subsequent formation of Casparian strips, a cell wall modification of the root endodermis that determines an apoplastic barrier between the intraorganismal apoplasm and the extraorganismal apoplasm and prevents lateral diffusion. The chain is Casparian strip membrane protein 2 from Panicum virgatum (Blackwell switchgrass).